A 190-amino-acid polypeptide reads, in one-letter code: FMRFamide-related peptides (190 aa).

The first 21 residues, 1–21, serve as a signal peptide directing secretion; sequence MSCSRTVALLAALWLVVGATS. Positions 22–33 are excised as a propeptide; that stretch reads SPVRRSPDLEAR. Phenylalanine 45 carries the post-translational modification Phenylalanine amide. Residues 69–104 constitute a propeptide that is removed on maturation; it reads GNSFLRFGRSQPLTLSTDDLVSLLRAYEEDYDTPMT. Phenylalanine 113 is subject to Phenylalanine amide. Residues 116 to 150 constitute a propeptide that is removed on maturation; the sequence is DPNFIRLGRSADDDKSAFEQNSELVVSGYPQRKSR. Leucine 158 carries the leucine amide modification. Positions 160 to 190 are excised as a propeptide; sequence RDSEEVNENEFEETEESRRKRSADSCHDCQS. The segment at 161–190 is disordered; it reads DSEEVNENEFEETEESRRKRSADSCHDCQS. A compositionally biased stretch (acidic residues) spans 164-174; that stretch reads EVNENEFEETE. Over residues 175-190 the composition is skewed to basic and acidic residues; sequence ESRRKRSADSCHDCQS.

Belongs to the FARP (FMRFamide related peptide) family. RFamide 1: Expressed in corpora cardiaca (CC), corpora allata (CA), antennal lobe (AL) and gnathal ganglion (GNG) (at protein level). Expression in AL detected in most animals, in CC, CA and in GNG in some animals (at protein level). RFamide precursor-related peptide 2: Expressed in corpora cardiaca (CC), corpora allata (CA), antennal lobe (AL) and gnathal ganglion (GNG) (at protein level). Expression in AL detected in some animals, expression in CC, CA and GNG in few animals (at protein level). RFamide 3: Expressed in corpora cardiaca (CC), corpora allata (CA), antennal lobe (AL) and gnathal ganglion (GNG) (at protein level). Expression in AL detected in all animals, in CC, CA and GNG in most animals (at protein level). RFamide 5: Expressed in corpora cardiaca (CC), corpora allata (CA), antennal lobe (AL) and gnathal ganglion (GNG) (at protein level). Expression in AL detected in all animals, in CC, CA and in GNG in some animals (at protein level).

Its subcellular location is the secreted. In insects, FMRFamide and related peptides have modulatory actions at skeletal neuromuscular junctions, and peptides that are immunologically related to FMRFamide are released into the circulation from neurohemal organs. The polypeptide is FMRFamide-related peptides (Agrotis ipsilon (Black cutworm moth)).